We begin with the raw amino-acid sequence, 527 residues long: Formate--tetrahydrofolate ligase (527 aa).

53–60 (TSSGEGKT) is an ATP binding site.

It belongs to the formate--tetrahydrofolate ligase family.

The enzyme catalyses (6S)-5,6,7,8-tetrahydrofolate + formate + ATP = (6R)-10-formyltetrahydrofolate + ADP + phosphate. The protein operates within one-carbon metabolism; tetrahydrofolate interconversion. This chain is Formate--tetrahydrofolate ligase, found in Acholeplasma laidlawii (strain PG-8A).